The sequence spans 738 residues: Flagellar radial spoke protein 2 (738 aa).

Arg104 carries the asymmetric dimethylarginine modification. Composition is skewed to acidic residues over residues 134–153 and 161–182; these read PDWV…EDEA and EGEE…DGEG. The tract at residues 134 to 189 is disordered; the sequence is PDWVAPEDDEAAAVETEDEAAGGAALAEGEEPPPEPEPEPEAAPEDGEGDAPAPKI. Asymmetric dimethylarginine is present on Arg260. The interval 357-426 is disordered; the sequence is AAAEAAAAAP…PPKPKKKKKV (70 aa). A compositionally biased stretch (acidic residues) spans 371–415; the sequence is EGEEGEGEAPPAEEEPPAEEEAEEEEEEAEEGAEEGAEEGEEGEE. An asymmetric dimethylarginine mark is found at Arg453, Arg538, and Arg615. Positions 674-738 are disordered; it reads AEAGEGEAVA…SSEESKAAAE (65 aa). Low complexity predominate over residues 689–730; the sequence is PAEAEAAPAEGEAAPPAEGEGEAQPAQEGSNSSSSSSDSSSS.

It belongs to the dpy-30 family. Post-translationally, asymmetrically dimethylated at Arg-104, Arg-260, Arg-453, Arg-538 and Arg-615 during flagellum resorption. Probably methylated by PRMT1.

The protein resides in the cytoplasm. It localises to the cytoskeleton. Its subcellular location is the flagellum axoneme. Its function is as follows. Flagellar radial spokes contribute to the regulation of dynein arm activity and thus the pattern of flagellar bending. They consist of a thin stalk, which is attached to the a subfiber of the outer doublet microtubule, and a bulbous head, which is attached to the stalk and appears to interact with the projections from the central pair of microtubules. Binds calmodulin in a calcium-dependent manner. The sequence is that of Flagellar radial spoke protein 2 from Chlamydomonas reinhardtii (Chlamydomonas smithii).